Here is a 527-residue protein sequence, read N- to C-terminus: 4-alpha-glucanotransferase (527 aa).

The protein belongs to the disproportionating enzyme family.

Its subcellular location is the cytoplasm. It catalyses the reaction Transfers a segment of a (1-&gt;4)-alpha-D-glucan to a new position in an acceptor, which may be glucose or a (1-&gt;4)-alpha-D-glucan.. In Chlamydia muridarum (strain MoPn / Nigg), this protein is 4-alpha-glucanotransferase (malQ).